Reading from the N-terminus, the 466-residue chain is MVDVLNIESLDLEARGIAHRDGKVLFVEGALPGERVTVQTVRRKPSYEIAKVEEILRPSSQRVAPRCPHFGVCGGCAMQHLAPAAQVAIKQRALEDTFWHVGKLKPARILPPLYGPTWGYRYRARLSVRVVPKKGGVLVGFHERKSSYVADMRECHVLPPAVSRLLLPLRAMIAAMSAPDRMPQIEVALGDEAIVLVLRHLLPLTDGDIAVLRAFAAEHGVQWWLQSKGPDTVHPLEREHADALAYTLPEFGLRMPYRPTDFTQVNHAINRAMVSRALKLLDVQPQDRVADLFCGLGNFTLPLATQGREAVGVEGSKALTDRAHEAAARHGLGERTRFATLNLFEVDVQWLRGLGYFDRMLIDPPREGAQAVVQALSLLAPGERPRRIVYVSCNPGTLARDAAIMVHEGGYALRSAGVINMFPHTGHVESIAVFESLDEATVLQAQAQARQKAREEAERLAEAAAA.

Residues 1 to 54 (MVDVLNIESLDLEARGIAHRDGKVLFVEGALPGERVTVQTVRRKPSYEIAKVEE) enclose the TRAM domain. [4Fe-4S] cluster contacts are provided by Cys-67, Cys-73, Cys-76, and Cys-155. Gln-264, Phe-293, Asn-298, Glu-314, Asn-342, and Asp-363 together coordinate S-adenosyl-L-methionine. The active-site Nucleophile is Cys-393.

The protein belongs to the class I-like SAM-binding methyltransferase superfamily. RNA M5U methyltransferase family. RlmD subfamily.

It carries out the reaction uridine(1939) in 23S rRNA + S-adenosyl-L-methionine = 5-methyluridine(1939) in 23S rRNA + S-adenosyl-L-homocysteine + H(+). Functionally, catalyzes the formation of 5-methyl-uridine at position 1939 (m5U1939) in 23S rRNA. The chain is 23S rRNA (uracil(1939)-C(5))-methyltransferase RlmD from Bordetella parapertussis (strain 12822 / ATCC BAA-587 / NCTC 13253).